The following is a 37-amino-acid chain: Large ribosomal subunit protein bL36 (37 aa).

Belongs to the bacterial ribosomal protein bL36 family.

This chain is Large ribosomal subunit protein bL36, found in Symbiobacterium thermophilum (strain DSM 24528 / JCM 14929 / IAM 14863 / T).